Here is a 574-residue protein sequence, read N- to C-terminus: Serine carboxypeptidase ctsa-3.1 (574 aa).

Residues 1–19 (MCRTLLGVAFLVVTVLSQG) form the signal peptide. Residues asparagine 48 and asparagine 163 are each glycosylated (N-linked (GlcNAc...) asparagine). Residue serine 172 is part of the active site. Residues asparagine 241, asparagine 408, asparagine 414, and asparagine 426 are each glycosylated (N-linked (GlcNAc...) asparagine). Catalysis depends on residues aspartate 441 and histidine 507. A glycan (N-linked (GlcNAc...) asparagine) is linked at asparagine 534.

The protein belongs to the peptidase S10 family.

The polypeptide is Serine carboxypeptidase ctsa-3.1 (Caenorhabditis elegans).